A 289-amino-acid chain; its full sequence is Palmitoyl-protein thioesterase 3 (289 aa).

The signal sequence occupies residues 1 to 20 (MRILSSLILLIALAIALVSA). Serine 97 is a catalytic residue. 2 N-linked (GlcNAc...) asparagine glycosylation sites follow: asparagine 189 and asparagine 195. Catalysis depends on residues aspartate 210 and histidine 266. Residue asparagine 281 is glycosylated (N-linked (GlcNAc...) asparagine).

Belongs to the palmitoyl-protein thioesterase family.

The protein localises to the lysosome. It catalyses the reaction S-hexadecanoyl-L-cysteinyl-[protein] + H2O = L-cysteinyl-[protein] + hexadecanoate + H(+). Its function is as follows. Removes thioester-linked fatty acyl groups such as palmitate from modified cysteine residues in proteins or peptides during lysosomal degradation. In Dictyostelium discoideum (Social amoeba), this protein is Palmitoyl-protein thioesterase 3 (ppt3).